The primary structure comprises 330 residues: ADP-L-glycero-D-manno-heptose-6-epimerase (330 aa).

Residues 11–12, 32–33, lysine 39, lysine 54, 75–79, and asparagine 92 contribute to the NADP(+) site; these read FI, DN, and EGACS. Catalysis depends on tyrosine 139, which acts as the Proton acceptor. NADP(+) is bound at residue lysine 143. Substrate is bound at residue asparagine 168. NADP(+) is bound by residues valine 169 and lysine 177. The active-site Proton acceptor is lysine 177. Substrate is bound by residues arginine 179, histidine 186, 200 to 203, arginine 213, and tyrosine 292; that span reads FGEY.

Belongs to the NAD(P)-dependent epimerase/dehydratase family. HldD subfamily. In terms of assembly, homopentamer. Requires NADP(+) as cofactor.

The enzyme catalyses ADP-D-glycero-beta-D-manno-heptose = ADP-L-glycero-beta-D-manno-heptose. The protein operates within nucleotide-sugar biosynthesis; ADP-L-glycero-beta-D-manno-heptose biosynthesis; ADP-L-glycero-beta-D-manno-heptose from D-glycero-beta-D-manno-heptose 7-phosphate: step 4/4. Its function is as follows. Catalyzes the interconversion between ADP-D-glycero-beta-D-manno-heptose and ADP-L-glycero-beta-D-manno-heptose via an epimerization at carbon 6 of the heptose. This is ADP-L-glycero-D-manno-heptose-6-epimerase from Paraburkholderia phymatum (strain DSM 17167 / CIP 108236 / LMG 21445 / STM815) (Burkholderia phymatum).